The sequence spans 277 residues: Exosome complex component Rrp42 (277 aa).

The protein belongs to the RNase PH family. Rrp42 subfamily. As to quaternary structure, component of the archaeal exosome complex. Forms a hexameric ring-like arrangement composed of 3 Rrp41-Rrp42 heterodimers. The hexameric ring associates with a trimer of Rrp4 and/or Csl4 subunits.

Its subcellular location is the cytoplasm. Functionally, non-catalytic component of the exosome, which is a complex involved in RNA degradation. Contributes to the structuring of the Rrp41 active site. This chain is Exosome complex component Rrp42, found in Pyrococcus furiosus (strain ATCC 43587 / DSM 3638 / JCM 8422 / Vc1).